The sequence spans 45 residues: Lysis protein for colicin E1* (45 aa).

The first 17 residues, 1–17 (MRKRFFVGIFAINLLVG), serve as a signal peptide directing secretion. The N-palmitoyl cysteine moiety is linked to residue Cys-18. Cys-18 carries the S-diacylglycerol cysteine lipid modification.

The protein resides in the cell outer membrane. In terms of biological role, lysis proteins are required for both colicin release and partial cell lysis. This Shigella sonnei protein is Lysis protein for colicin E1* (kil).